A 281-amino-acid polypeptide reads, in one-letter code: 2,3,4,5-tetrahydropyridine-2,6-dicarboxylate N-succinyltransferase (281 aa).

Residues Arg-108 and Asp-145 each contribute to the substrate site.

It belongs to the transferase hexapeptide repeat family. In terms of assembly, homotrimer.

The protein resides in the cytoplasm. It carries out the reaction (S)-2,3,4,5-tetrahydrodipicolinate + succinyl-CoA + H2O = (S)-2-succinylamino-6-oxoheptanedioate + CoA. It participates in amino-acid biosynthesis; L-lysine biosynthesis via DAP pathway; LL-2,6-diaminopimelate from (S)-tetrahydrodipicolinate (succinylase route): step 1/3. The sequence is that of 2,3,4,5-tetrahydropyridine-2,6-dicarboxylate N-succinyltransferase from Rhodopseudomonas palustris (strain ATCC BAA-98 / CGA009).